The following is a 450-amino-acid chain: Methylenetetrahydrofolate--tRNA-(uracil-5-)-methyltransferase TrmFO (450 aa).

Residue 9 to 14 (GGGMAG) participates in FAD binding.

The protein belongs to the MnmG family. TrmFO subfamily. The cofactor is FAD.

It is found in the cytoplasm. It carries out the reaction uridine(54) in tRNA + (6R)-5,10-methylene-5,6,7,8-tetrahydrofolate + NADH + H(+) = 5-methyluridine(54) in tRNA + (6S)-5,6,7,8-tetrahydrofolate + NAD(+). The catalysed reaction is uridine(54) in tRNA + (6R)-5,10-methylene-5,6,7,8-tetrahydrofolate + NADPH + H(+) = 5-methyluridine(54) in tRNA + (6S)-5,6,7,8-tetrahydrofolate + NADP(+). Functionally, catalyzes the folate-dependent formation of 5-methyl-uridine at position 54 (M-5-U54) in all tRNAs. This is Methylenetetrahydrofolate--tRNA-(uracil-5-)-methyltransferase TrmFO from Roseobacter denitrificans (strain ATCC 33942 / OCh 114) (Erythrobacter sp. (strain OCh 114)).